We begin with the raw amino-acid sequence, 396 residues long: Argininosuccinate synthase (396 aa).

Position 9–17 (9–17 (AYSGGLDTS)) interacts with ATP. Residue Tyr85 coordinates L-citrulline. Gly115 lines the ATP pocket. L-aspartate-binding residues include Thr117, Asn121, and Asp122. Asn121 serves as a coordination point for L-citrulline. 4 residues coordinate L-citrulline: Arg125, Ser173, Glu258, and Tyr270.

The protein belongs to the argininosuccinate synthase family. Type 1 subfamily. Homotetramer.

The protein localises to the cytoplasm. It catalyses the reaction L-citrulline + L-aspartate + ATP = 2-(N(omega)-L-arginino)succinate + AMP + diphosphate + H(+). It participates in amino-acid biosynthesis; L-arginine biosynthesis; L-arginine from L-ornithine and carbamoyl phosphate: step 2/3. In Streptococcus agalactiae serotype V (strain ATCC BAA-611 / 2603 V/R), this protein is Argininosuccinate synthase.